Here is a 497-residue protein sequence, read N- to C-terminus: DNA-dependent metalloprotease SPRTN (497 aa).

M1 carries the N-acetylmethionine modification. One can recognise a SprT-like domain in the interval 46-213 (LQALFLQFND…KTCGGTYIKI (168 aa)). H112 lines the Zn(2+) pocket. E113 is a catalytic residue. Positions 116 and 131 each coordinate Zn(2+). Position 231 is an N6-acetyllysine (K231). An SHP-box motif is present at residues 254-262 (FSGKGYVLG). Position 269 is a phosphoserine (S269). Residue K304 forms a Glycyl lysine isopeptide (Lys-Gly) (interchain with G-Cter in SUMO2) linkage. Positions 326-333 (QSVLSSYF) match the PIP-box motif. K342 is covalently cross-linked (Glycyl lysine isopeptide (Lys-Gly) (interchain with G-Cter in SUMO2); alternate). K342 is covalently cross-linked (Glycyl lysine isopeptide (Lys-Gly) (interchain with G-Cter in ubiquitin); alternate). The segment at 344–459 (FRNVNGSPVK…ASAPQSLSSQ (116 aa)) is disordered. A compositionally biased stretch (polar residues) spans 347 to 356 (VNGSPVKNGT). K362 is covalently cross-linked (Glycyl lysine isopeptide (Lys-Gly) (interchain with G-Cter in SUMO2)). Over residues 383 to 404 (TSKVTAPASATVTSAAGTSATI) the composition is skewed to low complexity. S384 is subject to Phosphoserine. A Nuclear localization signal motif is present at residues 413–424 (DQFLNKRPRLED). Over residues 420–432 (PRLEDRTALDTIK) the composition is skewed to basic and acidic residues. Residue K432 forms a Glycyl lysine isopeptide (Lys-Gly) (interchain with G-Cter in SUMO2) linkage. Over residues 442–459 (RSSSQPTAASAPQSLSSQ) the composition is skewed to low complexity. Residues 462 to 489 (LVNCPVCQGVVVESQINEHLDRCLEGNK) form a UBZ4-type zinc finger. Positions 465, 468, 480, and 484 each coordinate Zn(2+).

Belongs to the Spartan family. In terms of assembly, homodimer. Interacts (VIA PIP-box) with PCNA (when ubiquitinated). Interacts (via its SHP-box) with VCP/p97. Interacts with RAD18. Interacts with KCTD13 and POLD3. The cofactor is Zn(2+). Post-translationally, autocatalytically cleaved in response to double-stranded DNA-binding: autocatalytic cleavage takes place in trans and leads to inactivation. Monoubiquitinated; monoubiquitination promotes exclusion from chromatin. Deubiquitinated by VCPIP1: deubiquitination is required for subsequent acetylation and recruitment to chromatin and DNA damage sites. In terms of processing, acetylated following deubiquitination by VCPIP1, leading to recruitment to chromatin and DNA damage sites. Post-translationally, phosphorylation by CHEK1 promotes recruitment to chromatin.

Its subcellular location is the nucleus. It is found in the chromosome. Its activity is regulated as follows. DNA-binding activates the protease activity: single-stranded DNA-binding specifically activates ability to cleave covalent DNA-protein cross-links (DPCs). In contrast, double-stranded DNA-binding specifically activates autocatalytic cleavage, and subsequent inactivation. Its function is as follows. DNA-dependent metalloendopeptidase that mediates the proteolytic cleavage of covalent DNA-protein cross-links (DPCs) during DNA synthesis, thereby playing a key role in maintaining genomic integrity. DPCs are highly toxic DNA lesions that interfere with essential chromatin transactions, such as replication and transcription, and which are induced by reactive agents, such as UV light or formaldehyde. Associates with the DNA replication machinery and specifically removes DPCs during DNA synthesis. Catalyzes proteolytic cleavage of the HMCES DNA-protein cross-link following unfolding by the BRIP1/FANCJ helicase. Acts as a pleiotropic protease for DNA-binding proteins cross-linked with DNA, such as TOP1, TOP2A, histones H3 and H4. Mediates degradation of DPCs that are not ubiquitinated, while it is not able to degrade ubiquitinated DPCs. SPRTN activation requires polymerase collision with DPCs followed by helicase bypass of DPCs. Involved in recruitment of VCP/p97 to sites of DNA damage. Also acts as an activator of CHEK1 during normal DNA replication by mediating proteolytic cleavage of CHEK1, thereby promoting CHEK1 removal from chromatin and subsequent activation. Does not activate CHEK1 in response to DNA damage. May also act as a 'reader' of ubiquitinated PCNA: recruited to sites of UV damage and interacts with ubiquitinated PCNA and RAD18, the E3 ubiquitin ligase that monoubiquitinates PCNA. Facilitates chromatin association of RAD18 and is required for efficient PCNA monoubiquitination, promoting a feed-forward loop to enhance PCNA ubiquitination and translesion DNA synthesis. The sequence is that of DNA-dependent metalloprotease SPRTN from Mus musculus (Mouse).